The primary structure comprises 108 residues: Somatoliberin (108 aa).

The signal sequence occupies residues 1–20 (MPLWVFFFVILTLSNSSHCS). The propeptide occupies 21–31 (PPPPLTLRMRR). A Leucine amide modification is found at Leu-75. The propeptide occupies 78–108 (QVDSMWAEQKQMELESILVALLQKHSRNSQG).

Belongs to the glucagon family.

Its subcellular location is the secreted. In terms of biological role, GRF is released by the hypothalamus and acts on the adenohypophyse to stimulate the secretion of growth hormone. The chain is Somatoliberin (GHRH) from Homo sapiens (Human).